The primary structure comprises 123 residues: Small ribosomal subunit protein uS12 (123 aa).

Asp89 carries the 3-methylthioaspartic acid modification. Positions 100-123 (GSLDTSGVSDRKQGRSKYGTKRPK) are disordered. The segment covering 113-123 (GRSKYGTKRPK) has biased composition (basic residues).

Belongs to the universal ribosomal protein uS12 family. In terms of assembly, part of the 30S ribosomal subunit. Contacts proteins S8 and S17. May interact with IF1 in the 30S initiation complex.

Its function is as follows. With S4 and S5 plays an important role in translational accuracy. Functionally, interacts with and stabilizes bases of the 16S rRNA that are involved in tRNA selection in the A site and with the mRNA backbone. Located at the interface of the 30S and 50S subunits, it traverses the body of the 30S subunit contacting proteins on the other side and probably holding the rRNA structure together. The combined cluster of proteins S8, S12 and S17 appears to hold together the shoulder and platform of the 30S subunit. This Saccharophagus degradans (strain 2-40 / ATCC 43961 / DSM 17024) protein is Small ribosomal subunit protein uS12.